The following is a 577-amino-acid chain: Proline--tRNA ligase (577 aa).

It belongs to the class-II aminoacyl-tRNA synthetase family. ProS type 1 subfamily. Homodimer.

The protein resides in the cytoplasm. It catalyses the reaction tRNA(Pro) + L-proline + ATP = L-prolyl-tRNA(Pro) + AMP + diphosphate. In terms of biological role, catalyzes the attachment of proline to tRNA(Pro) in a two-step reaction: proline is first activated by ATP to form Pro-AMP and then transferred to the acceptor end of tRNA(Pro). As ProRS can inadvertently accommodate and process non-cognate amino acids such as alanine and cysteine, to avoid such errors it has two additional distinct editing activities against alanine. One activity is designated as 'pretransfer' editing and involves the tRNA(Pro)-independent hydrolysis of activated Ala-AMP. The other activity is designated 'posttransfer' editing and involves deacylation of mischarged Ala-tRNA(Pro). The misacylated Cys-tRNA(Pro) is not edited by ProRS. This chain is Proline--tRNA ligase, found in Helicobacter pylori (strain G27).